Consider the following 434-residue polypeptide: Probable tRNA pseudouridine synthase D (434 aa).

D93 (nucleophile) is an active-site residue. Residues 169–396 (GTPNYFGQQR…SAGSRRAILL (228 aa)) enclose the TRUD domain.

This sequence belongs to the pseudouridine synthase TruD family.

It carries out the reaction uridine(13) in tRNA = pseudouridine(13) in tRNA. In terms of biological role, could be responsible for synthesis of pseudouridine from uracil-13 in transfer RNAs. This is Probable tRNA pseudouridine synthase D from Halobacterium salinarum (strain ATCC 29341 / DSM 671 / R1).